Reading from the N-terminus, the 649-residue chain is Acetyl-coenzyme A synthetase (649 aa).

CoA-binding positions include 191–194, T311, and N335; that span reads RGGR. Residues 387 to 389, 411 to 416, D500, and R515 contribute to the ATP site; these read GEP and DTWWQT. Residue S523 coordinates CoA. R526 is an ATP binding site. 3 residues coordinate Mg(2+): V537, H539, and I542. R584 provides a ligand contact to CoA. K609 carries the N6-acetyllysine modification.

Belongs to the ATP-dependent AMP-binding enzyme family. The cofactor is Mg(2+). Acetylated. Deacetylation by the SIR2-homolog deacetylase activates the enzyme.

It catalyses the reaction acetate + ATP + CoA = acetyl-CoA + AMP + diphosphate. In terms of biological role, catalyzes the conversion of acetate into acetyl-CoA (AcCoA), an essential intermediate at the junction of anabolic and catabolic pathways. AcsA undergoes a two-step reaction. In the first half reaction, AcsA combines acetate with ATP to form acetyl-adenylate (AcAMP) intermediate. In the second half reaction, it can then transfer the acetyl group from AcAMP to the sulfhydryl group of CoA, forming the product AcCoA. This chain is Acetyl-coenzyme A synthetase, found in Psychromonas ingrahamii (strain DSM 17664 / CCUG 51855 / 37).